A 460-amino-acid chain; its full sequence is Bifunctional protein GlmU (460 aa).

Positions 1-232 are pyrophosphorylase; sequence MALNVVILAA…AIEVEGANNR (232 aa). Residues 8–11, Lys22, Gln73, 78–79, 100–102, Gly137, Glu157, Asn172, and Asn230 contribute to the UDP-N-acetyl-alpha-D-glucosamine site; these read LAAG, GT, and YGD. Asp102 contributes to the Mg(2+) binding site. Mg(2+) is bound at residue Asn230. The segment at 233–253 is linker; it reads VQLAQLERAYQAREAEKLMLA. The tract at residues 254–460 is N-acetyltransferase; the sequence is GANLRDPSRI…GWQRPVKIKK (207 aa). UDP-N-acetyl-alpha-D-glucosamine-binding residues include Arg336 and Lys354. Residue His366 is the Proton acceptor of the active site. UDP-N-acetyl-alpha-D-glucosamine-binding residues include Tyr369 and Asn380. Residues Ala383, 389–390, Ser408, Ala426, and Arg443 each bind acetyl-CoA; that span reads NY.

This sequence in the N-terminal section; belongs to the N-acetylglucosamine-1-phosphate uridyltransferase family. It in the C-terminal section; belongs to the transferase hexapeptide repeat family. Homotrimer. Requires Mg(2+) as cofactor.

The protein localises to the cytoplasm. It carries out the reaction alpha-D-glucosamine 1-phosphate + acetyl-CoA = N-acetyl-alpha-D-glucosamine 1-phosphate + CoA + H(+). It catalyses the reaction N-acetyl-alpha-D-glucosamine 1-phosphate + UTP + H(+) = UDP-N-acetyl-alpha-D-glucosamine + diphosphate. It participates in nucleotide-sugar biosynthesis; UDP-N-acetyl-alpha-D-glucosamine biosynthesis; N-acetyl-alpha-D-glucosamine 1-phosphate from alpha-D-glucosamine 6-phosphate (route II): step 2/2. Its pathway is nucleotide-sugar biosynthesis; UDP-N-acetyl-alpha-D-glucosamine biosynthesis; UDP-N-acetyl-alpha-D-glucosamine from N-acetyl-alpha-D-glucosamine 1-phosphate: step 1/1. It functions in the pathway bacterial outer membrane biogenesis; LPS lipid A biosynthesis. In terms of biological role, catalyzes the last two sequential reactions in the de novo biosynthetic pathway for UDP-N-acetylglucosamine (UDP-GlcNAc). The C-terminal domain catalyzes the transfer of acetyl group from acetyl coenzyme A to glucosamine-1-phosphate (GlcN-1-P) to produce N-acetylglucosamine-1-phosphate (GlcNAc-1-P), which is converted into UDP-GlcNAc by the transfer of uridine 5-monophosphate (from uridine 5-triphosphate), a reaction catalyzed by the N-terminal domain. This Shewanella baltica (strain OS195) protein is Bifunctional protein GlmU.